Consider the following 1002-residue polypeptide: Protein SMAX1-LIKE 7 (1002 aa).

The 178-residue stretch at 8–185 folds into the Clp R domain; that stretch reads ARQCLTEETA…DVLHPPVTSQ (178 aa). Repeat stretches follow at residues 12-86 and 103-185; these read LTEE…LDRL and VSNS…VTSQ. The EAR signature appears at 854–858; sequence LDLNL.

The protein belongs to the ClpA/ClpB family. As to quaternary structure, interacts with TPL/TPR in an EAR-motif dependent manner. Interacts with TPL, TPR1, TPR2 and TPR4. Interacts with MAX2 and TPR2. Interacts with D14. The interaction with D14 occurs in the presence of (2'R) stereoisomers of strigolactones, but not (2'S) stereoisomers. Post-translationally, ubiquitinated upon strigolactone treatment. Strigolactone, but not karrikin, triggers rapid SCF(MAX2)-dependent degradation. Expressed in axillary branches and roots. Detected in seedlings and leaves. Expressed in the primary rosette buds and expanding leaves of adult rosettes, the vasculature of the hypocotyls, cotyledons, and mature roots, and in the midvein and petioles of young leaves.

It is found in the nucleus. Functionally, probable component of a transcriptional corepressor complex involved in branching control. Regulates cotyledon expansion and lateral root growth, but not germination or hypocotyl elongation. Promotes auxin transport and PIN1 accumulation in the stem and represses BRC1/TCP18 expression in axillary buds. In Arabidopsis thaliana (Mouse-ear cress), this protein is Protein SMAX1-LIKE 7.